A 1043-amino-acid polypeptide reads, in one-letter code: Constitutive coactivator of PPAR-gamma-like protein 1 homolog (1043 aa).

2 disordered regions span residues 353–497 (SMVP…HMQI) and 929–1043 (YGRG…NKEE). Polar residues-rich tracts occupy residues 362–375 (QMLN…QSRP) and 405–419 (SPIN…NHVD). Composition is skewed to basic and acidic residues over residues 451-471 (TWDK…EQAK) and 951-964 (EVAK…EDSK). The interval 801–1043 (VELATKVEKM…LEGAVANKEE (243 aa)) is RNA binding. The span at 995–1010 (EARASSNSESALSSDS) shows a compositional bias: low complexity.

This sequence belongs to the constitutive coactivator of PPAR-gamma family.

Its subcellular location is the cytoplasm. It is found in the cell membrane. Its function is as follows. May bee involved in the oxidative stress-induced survival signaling. Binds RNA. May participate in mRNA transport in the cytoplasm. The sequence is that of Constitutive coactivator of PPAR-gamma-like protein 1 homolog (fam120a) from Xenopus tropicalis (Western clawed frog).